An 80-amino-acid polypeptide reads, in one-letter code: Translation initiation factor IF-1 (80 aa).

The region spanning 6 to 80 (EKKKKDESDS…TSRGRIVYRR (75 aa)) is the S1-like domain.

This sequence belongs to the IF-1 family. Component of the 30S ribosomal translation pre-initiation complex which assembles on the 30S ribosome in the order IF-2 and IF-3, IF-1 and N-formylmethionyl-tRNA(fMet); mRNA recruitment can occur at any time during PIC assembly.

The protein resides in the cytoplasm. One of the essential components for the initiation of protein synthesis. Stabilizes the binding of IF-2 and IF-3 on the 30S subunit to which N-formylmethionyl-tRNA(fMet) subsequently binds. Helps modulate mRNA selection, yielding the 30S pre-initiation complex (PIC). Upon addition of the 50S ribosomal subunit IF-1, IF-2 and IF-3 are released leaving the mature 70S translation initiation complex. This is Translation initiation factor IF-1 from Deinococcus radiodurans (strain ATCC 13939 / DSM 20539 / JCM 16871 / CCUG 27074 / LMG 4051 / NBRC 15346 / NCIMB 9279 / VKM B-1422 / R1).